The primary structure comprises 143 residues: Nucleoside diphosphate kinase (143 aa).

K11, F59, R87, T93, R104, and N114 together coordinate ATP. H117 acts as the Pros-phosphohistidine intermediate in catalysis.

This sequence belongs to the NDK family. Homotetramer. Requires Mg(2+) as cofactor.

The protein resides in the cytoplasm. It carries out the reaction a 2'-deoxyribonucleoside 5'-diphosphate + ATP = a 2'-deoxyribonucleoside 5'-triphosphate + ADP. The enzyme catalyses a ribonucleoside 5'-diphosphate + ATP = a ribonucleoside 5'-triphosphate + ADP. Its function is as follows. Major role in the synthesis of nucleoside triphosphates other than ATP. The ATP gamma phosphate is transferred to the NDP beta phosphate via a ping-pong mechanism, using a phosphorylated active-site intermediate. This Shewanella amazonensis (strain ATCC BAA-1098 / SB2B) protein is Nucleoside diphosphate kinase.